Here is a 210-residue protein sequence, read N- to C-terminus: ATP phosphoribosyltransferase (210 aa).

Belongs to the ATP phosphoribosyltransferase family. Short subfamily. In terms of assembly, heteromultimer composed of HisG and HisZ subunits.

It localises to the cytoplasm. The catalysed reaction is 1-(5-phospho-beta-D-ribosyl)-ATP + diphosphate = 5-phospho-alpha-D-ribose 1-diphosphate + ATP. Its pathway is amino-acid biosynthesis; L-histidine biosynthesis; L-histidine from 5-phospho-alpha-D-ribose 1-diphosphate: step 1/9. In terms of biological role, catalyzes the condensation of ATP and 5-phosphoribose 1-diphosphate to form N'-(5'-phosphoribosyl)-ATP (PR-ATP). Has a crucial role in the pathway because the rate of histidine biosynthesis seems to be controlled primarily by regulation of HisG enzymatic activity. This chain is ATP phosphoribosyltransferase (hisG), found in Synechocystis sp. (strain ATCC 27184 / PCC 6803 / Kazusa).